The sequence spans 410 residues: Divergent protein kinase domain 1A (410 aa).

The Cytoplasmic portion of the chain corresponds to 1–5; sequence MARLS. A helical transmembrane segment spans residues 6–26; sequence YVRIKYLFFSWLAVFIGSWVI. Residues 27–410 lie on the Lumenal side of the membrane; sequence YVRYNSYTEL…WKKISHTNDS (384 aa).

Belongs to the DIPK family. In terms of processing, among the many cysteines in the lumenal domain, most are probably involved in disulfide bonds.

It is found in the endoplasmic reticulum membrane. The sequence is that of Divergent protein kinase domain 1A (dipk1a) from Xenopus laevis (African clawed frog).